The sequence spans 218 residues: Adenylate kinase (218 aa).

Residue 11–16 coordinates ATP; that stretch reads GAGKGT. The segment at 31-60 is NMP; the sequence is STGDMFREAMANKTKVGLEAKSYIDKGNLV. AMP contacts are provided by residues Thr-32, Arg-37, 58–60, 86–89, and Gln-93; these read NLV and GFPR. An LID region spans residues 127 to 165; it reads ARYMCKNCGATYNKISKQPKVEGTCDRCGSHEFYQREDD. Position 128 (Arg-128) interacts with ATP. 2 residues coordinate Zn(2+): Cys-131 and Cys-134. 137–138 contacts ATP; sequence TY. Zn(2+) is bound by residues Cys-151 and Cys-154. Residues Arg-162 and Arg-173 each contribute to the AMP site. An ATP-binding site is contributed by Gln-201.

The protein belongs to the adenylate kinase family. In terms of assembly, monomer.

It is found in the cytoplasm. It catalyses the reaction AMP + ATP = 2 ADP. The protein operates within purine metabolism; AMP biosynthesis via salvage pathway; AMP from ADP: step 1/1. Catalyzes the reversible transfer of the terminal phosphate group between ATP and AMP. Plays an important role in cellular energy homeostasis and in adenine nucleotide metabolism. The sequence is that of Adenylate kinase from Lactobacillus acidophilus (strain ATCC 700396 / NCK56 / N2 / NCFM).